Here is a 348-residue protein sequence, read N- to C-terminus: MTYNIVALPGDGIGPEILNGSLSLLEIISNKYNFNYQIEHHEFGGASIDTFGEPLTEKTLNACKRADAILLGAIGGPKWTDPNNRPEQGLLKLRKSLNLFVNIRPTTVVKGASSLSPLKEERVEGTDLVIVRELTSGIYFGEPRHFNNHEALDSLTYTREEIERIVHVAFKLAASRRGKLTSVDKENVLASSKLWRKVVNEVSQLYPEVTVNHLLVDACSMHLITNPKQFDVIVCENLFGDILSDEASVIPGSLGLSPSASFSNDGPRLYEPIHGSAPDIAGKNVANPFGMILSLAMCLRESLNQPDAADELEQHIYSMIEHGQTTADLGGKLNTTDIFEILSQKLNH.

NAD(+) is bound at residue 76–87; the sequence is GPKWTDPNNRPE. Residues Arg-94, Arg-104, Arg-132, and Asp-217 each coordinate substrate. The Mg(2+) site is built by Asp-217, Asp-241, and Asp-245. 275–287 contributes to the NAD(+) binding site; sequence GSAPDIAGKNVAN.

It belongs to the isocitrate and isopropylmalate dehydrogenases family. LeuB type 1 subfamily. Homodimer. The cofactor is Mg(2+). Mn(2+) is required as a cofactor.

Its subcellular location is the cytoplasm. It catalyses the reaction (2R,3S)-3-isopropylmalate + NAD(+) = 4-methyl-2-oxopentanoate + CO2 + NADH. Its pathway is amino-acid biosynthesis; L-leucine biosynthesis; L-leucine from 3-methyl-2-oxobutanoate: step 3/4. In terms of biological role, catalyzes the oxidation of 3-carboxy-2-hydroxy-4-methylpentanoate (3-isopropylmalate) to 3-carboxy-4-methyl-2-oxopentanoate. The product decarboxylates to 4-methyl-2 oxopentanoate. This is 3-isopropylmalate dehydrogenase from Staphylococcus aureus (strain COL).